The chain runs to 132 residues: Large ribosomal subunit protein bL19 (132 aa).

This sequence belongs to the bacterial ribosomal protein bL19 family.

This protein is located at the 30S-50S ribosomal subunit interface and may play a role in the structure and function of the aminoacyl-tRNA binding site. The chain is Large ribosomal subunit protein bL19 from Persephonella marina (strain DSM 14350 / EX-H1).